A 231-amino-acid polypeptide reads, in one-letter code: uncharacterized protein (231 aa).

The chain crosses the membrane as a helical span at residues serine 10–histidine 30.

Its subcellular location is the membrane. This is an uncharacterized protein from Rickettsia prowazekii (strain Madrid E).